The following is a 513-amino-acid chain: Trigger factor (513 aa).

The PPIase FKBP-type domain occupies 164–249 (GDQIIIDFLG…VKAVKNAGEF (86 aa)). A disordered region spans residues 436-513 (QAAIEAEEGA…KAPAKKKAEG (78 aa)). A compositionally biased stretch (basic residues) spans 452–461 (AKKAPAKKKA). Residues 489–498 (ADEAPAAEEA) show a composition bias toward low complexity. Basic residues predominate over residues 501–513 (AKKKAPAKKKAEG).

This sequence belongs to the FKBP-type PPIase family. Tig subfamily.

The protein localises to the cytoplasm. It carries out the reaction [protein]-peptidylproline (omega=180) = [protein]-peptidylproline (omega=0). Involved in protein export. Acts as a chaperone by maintaining the newly synthesized protein in an open conformation. Functions as a peptidyl-prolyl cis-trans isomerase. This is Trigger factor from Novosphingobium aromaticivorans (strain ATCC 700278 / DSM 12444 / CCUG 56034 / CIP 105152 / NBRC 16084 / F199).